The following is an 818-amino-acid chain: H(+)/Cl(-) exchange transporter 3 (818 aa).

Residues 1 to 125 (MESEQLFHRG…WEMTKSLYDA (125 aa)) are Cytoplasmic-facing. Positions 13-17 (RNSYN) match the Di-leucine internalization motif; mediates targeting to late endosome and lysosome membranes motif. Residues 18-19 (SI) carry the IP motif; mediates targeting to recycling endosomes motif. 3 consecutive short sequence motifs (di-leucine internalization motif; mediates targeting to late endosome and lysosome membranes) follow at residues 28–29 (LL), 46–47 (LL), and 71–75 (LLDLL). Residues 126 to 163 (WSGWLVVTLTGLASGALAGLIDIAADWMTDLKEGICLS) form a helical membrane-spanning segment. Residue Asn-177 is glycosylated (N-linked (GlcNAc...) asparagine). A helical membrane pass occupies residues 209–232 (MNYIMYIFWALSFAFLAVSLVKVF). The Selectivity filter part_1 signature appears at 238 to 242 (GSGIP). Ser-239 is a chloride binding site. Residues 241 to 248 (IPEIKTIL) constitute an intramembrane region (helical). 2 helical membrane passes run 258–276 (GKWT…VASG) and 282–301 (EGPL…YLFP). The Selectivity filter part_2 motif lies at 280–284 (GKEGP). 2 consecutive intramembrane regions (helical) follow at residues 313 to 325 (VLSA…VSVA) and 329 to 337 (PIGGVLFSL). Transmembrane regions (helical) follow at residues 349-367 (LWRS…RSIN), 391-416 (FPFI…AWCR), and 423-443 (FGKY…VIAF). Residues Asn-451 and Asn-479 are each glycosylated (N-linked (GlcNAc...) asparagine). Helical transmembrane passes span 500 to 520 (IWQL…TFGI) and 525 to 544 (GLFI…VGIA). A Selectivity filter part_3 motif is present at residues 525–529 (GLFIP). A chloride-binding site is contributed by Phe-527. 2 consecutive intramembrane regions (helical) follow at residues 572-586 (GLYA…LGGV) and 590-601 (TVSLVVIVFELT). The segment at residues 602-605 (GGLE) is an intramembrane region (note=Loop between two helices). Residues 606–624 (YIVPLMAAVMTSKWVGDAF) traverse the membrane as a helical segment. The Cytoplasmic segment spans residues 625–818 (GREGIYEAHI…NQDPASIMFN (194 aa)). Tyr-630 provides a ligand contact to chloride. 2 CBS domains span residues 658–722 (MRPR…ARKK) and 755–812 (LDMS…NQDP). ATP is bound by residues 689 to 691 (YNG) and 796 to 799 (TKKD).

It belongs to the chloride channel (TC 2.A.49) family. ClC-3/CLCN3 subfamily. Monomer and homodimer. Forms heterodimers with CLCN4. In terms of processing, N-glycosylated. In terms of tissue distribution, detected in kidney, in the apical part of proximal tubule cells (at protein level). Expressed at high levels in the kidney while a low level expression is seen in the brain. Within the brain, it is prominent in the hippocampus, cerebral cortex and olfactory bulb. Brain, pancreas, kidney, liver, lung, retina, olfactory bulb, and spinal cord. As to expression, pancreas, kidney, liver, lung and retina. In terms of tissue distribution, brain, heart, pancreas, kidney, liver, lung, retina, olfactory bulb, and spinal cord. Expressed at high levels in the liver and at low levels in the brain.

The protein resides in the cytoplasmic vesicle. Its subcellular location is the secretory vesicle membrane. It is found in the lysosome membrane. The protein localises to the late endosome membrane. It localises to the cell membrane. The protein resides in the early endosome membrane. Its subcellular location is the recycling endosome membrane. With respect to regulation, inhibited by Cd(2+). In terms of biological role, may influence large dense-core vesicle exocytosis in adrenal chromaffin cells. Strongly outwardly rectifying, electrogenic H(+)/Cl(-)exchanger which mediates the exchange of chloride ions against protons. The CLC channel family contains both chloride channels and proton-coupled anion transporters that exchange chloride or another anion for protons. The presence of conserved gating glutamate residues is typical for family members that function as antiporters. Its function is as follows. Strongly outwardly rectifying, electrogenic H(+)/Cl(-)exchanger which mediates the exchange of chloride ions against protons. Facilitates endosomal acidification and chloride accumulation in hepatocytes. Functionally, strongly outwardly rectifying, electrogenic H(+)/Cl(-)exchanger which mediates the exchange of chloride ions against protons. The chain is H(+)/Cl(-) exchange transporter 3 (Clcn3) from Mus musculus (Mouse).